The chain runs to 329 residues: Beta-tectorin (329 aa).

The N-terminal stretch at 1–17 (MVVRAFVLLALFAEASA) is a signal peptide. In terms of domain architecture, ZP spans 19–283 (SCTPNKADVI…LSCPVNCDKR (265 aa)). N-linked (GlcNAc...) asparagine glycosylation is found at Asn-80, Asn-104, Asn-116, and Asn-145. A disulfide bridge links Cys-204 with Cys-264. Ala-305 carries the GPI-anchor amidated alanine lipid modification. The propeptide at 306 to 329 (FSGLCDFSDVLLHLILMLGTWAVL) is removed in mature form.

As to quaternary structure, may form homomeric filament after self-association or heteromeric filament after association with alpha-tectorin. Interacts with CEACAM16. Post-translationally, the presence of a hydrophobic C-terminus preceded by a potential cleavage site strongly suggests that tectorins are synthesized as glycosylphosphatidylinositol-linked, membrane-bound precursors. Tectorins are targeted to the apical surface of the inner ear epithelia by the lipid and proteolytically released into the extracellular compartment.

It is found in the cell membrane. The protein resides in the secreted. The protein localises to the extracellular space. Its subcellular location is the extracellular matrix. In terms of biological role, one of the major non-collagenous components of the tectorial membrane. The tectorial membrane is an extracellular matrix of the inner ear that covers the neuroepithelium of the cochlea and contacts the stereocilia bundles of specialized sensory hair cells. Sound induces movement of these hair cells relative to the tectorial membrane, deflects the stereocilia and leads to fluctuations in hair-cell membrane potential, transducing sound into electrical signals. The chain is Beta-tectorin (Tectb) from Mus musculus (Mouse).